An 81-amino-acid polypeptide reads, in one-letter code: Putative membrane protein insertion efficiency factor (81 aa).

The interval 61-81 (NDGGFDPVPPAPSSRTSSIAE) is disordered.

It belongs to the UPF0161 family.

It localises to the cell inner membrane. In terms of biological role, could be involved in insertion of integral membrane proteins into the membrane. This is Putative membrane protein insertion efficiency factor from Pseudomonas entomophila (strain L48).